The following is a 340-amino-acid chain: GTPase Obg (340 aa).

Positions 1–159 (MDFIDEVKLY…KYVVLKLKVL (159 aa)) constitute an Obg domain. Residues 160–329 (SDVGIIGMPN…LNEKLKKGSS (170 aa)) enclose the OBG-type G domain. GTP-binding positions include 166-173 (GMPNAGKS), 191-195 (FTTIK), 212-215 (DIPG), 279-282 (NKCD), and 310-312 (GED). Mg(2+) is bound by residues Ser-173 and Thr-193.

Belongs to the TRAFAC class OBG-HflX-like GTPase superfamily. OBG GTPase family. In terms of assembly, monomer. Mg(2+) serves as cofactor.

It localises to the cytoplasm. Functionally, an essential GTPase which binds GTP, GDP and possibly (p)ppGpp with moderate affinity, with high nucleotide exchange rates and a fairly low GTP hydrolysis rate. Plays a role in control of the cell cycle, stress response, ribosome biogenesis and in those bacteria that undergo differentiation, in morphogenesis control. The chain is GTPase Obg from Wolbachia sp. subsp. Brugia malayi (strain TRS).